Reading from the N-terminus, the 61-residue chain is Putative neurotoxin-A (61 aa).

The N-terminal stretch at 1–19 is a signal peptide; it reads MKTVCGVFMVLLALTVLLA. Cystine bridges form between Cys31/Cys50, Cys36/Cys55, and Cys40/Cys57.

The protein belongs to the short scorpion toxin superfamily. In terms of tissue distribution, expressed by the venom gland.

The protein resides in the secreted. This Lychas mucronatus (Chinese swimming scorpion) protein is Putative neurotoxin-A.